The following is a 156-amino-acid chain: Small ribosomal subunit protein uS7 (156 aa).

It belongs to the universal ribosomal protein uS7 family. In terms of assembly, part of the 30S ribosomal subunit. Contacts proteins S9 and S11.

Functionally, one of the primary rRNA binding proteins, it binds directly to 16S rRNA where it nucleates assembly of the head domain of the 30S subunit. Is located at the subunit interface close to the decoding center, probably blocks exit of the E-site tRNA. This Arthrobacter sp. (strain FB24) protein is Small ribosomal subunit protein uS7.